A 295-amino-acid polypeptide reads, in one-letter code: Pyridoxal 5'-phosphate synthase subunit PdxS (295 aa).

A D-ribose 5-phosphate-binding site is contributed by aspartate 25. Lysine 82 functions as the Schiff-base intermediate with D-ribose 5-phosphate in the catalytic mechanism. Glycine 154 provides a ligand contact to D-ribose 5-phosphate. Arginine 166 is a binding site for D-glyceraldehyde 3-phosphate. D-ribose 5-phosphate-binding positions include glycine 215 and 236–237 (GS).

It belongs to the PdxS/SNZ family. In the presence of PdxT, forms a dodecamer of heterodimers.

It carries out the reaction aldehydo-D-ribose 5-phosphate + D-glyceraldehyde 3-phosphate + L-glutamine = pyridoxal 5'-phosphate + L-glutamate + phosphate + 3 H2O + H(+). Its pathway is cofactor biosynthesis; pyridoxal 5'-phosphate biosynthesis. Catalyzes the formation of pyridoxal 5'-phosphate from ribose 5-phosphate (RBP), glyceraldehyde 3-phosphate (G3P) and ammonia. The ammonia is provided by the PdxT subunit. Can also use ribulose 5-phosphate and dihydroxyacetone phosphate as substrates, resulting from enzyme-catalyzed isomerization of RBP and G3P, respectively. The protein is Pyridoxal 5'-phosphate synthase subunit PdxS of Actinobacillus pleuropneumoniae serotype 7 (strain AP76).